The sequence spans 336 residues: N6-methyladenosine RNA methyltransferase MTA1 (336 aa).

The segment at 61–83 (LISSEPPHLPFKTPEPKAGSGGL) is disordered.

Belongs to the MT-A70-like family.

The enzyme catalyses an adenosine in mRNA + S-adenosyl-L-methionine = an N(6)-methyladenosine in mRNA + S-adenosyl-L-homocysteine + H(+). Functionally, N6-methyladenosine RNA methyltransferase that plays a crucial role in fungal phenotypic traits, virulence, and stress tolerance. Mediates the methylation of mRNAs to produce N6-methyladenosine (m6A)-containing mRNAs. M6A is a modification present at internal sites of mRNAs and some non-coding RNAs and plays a role in mRNA stability and processing. Mediates specifically acid phosphatase APHA mRNA stability through a YTHDF1-dependent m6A modification of the A1306, A1341, and A1666 key methylation modification sites. Also mediates the stability of the transcription factor ZAP1 mRNA via modification of residue A1935 localized in the 3'UTR. In Cryphonectria parasitica (strain ATCC 38755 / EP155), this protein is N6-methyladenosine RNA methyltransferase MTA1.